Consider the following 310-residue polypeptide: Protoheme IX farnesyltransferase 2 (310 aa).

Helical transmembrane passes span Ile-21–Gly-41, Ile-46–Leu-66, Phe-99–Thr-119, Trp-125–Leu-145, Ile-153–Thr-173, Gly-180–Leu-200, Val-226–Leu-246, Val-256–Val-276, and Ala-284–Val-304.

It belongs to the UbiA prenyltransferase family. Protoheme IX farnesyltransferase subfamily.

Its subcellular location is the cell membrane. The catalysed reaction is heme b + (2E,6E)-farnesyl diphosphate + H2O = Fe(II)-heme o + diphosphate. Its pathway is porphyrin-containing compound metabolism; heme O biosynthesis; heme O from protoheme: step 1/1. Functionally, converts heme B (protoheme IX) to heme O by substitution of the vinyl group on carbon 2 of heme B porphyrin ring with a hydroxyethyl farnesyl side group. The chain is Protoheme IX farnesyltransferase 2 from Cenarchaeum symbiosum (strain A).